Here is a 185-residue protein sequence, read N- to C-terminus: dTTP/UTP pyrophosphatase (185 aa).

The Proton acceptor role is filled by D67.

Belongs to the Maf family. YhdE subfamily. It depends on a divalent metal cation as a cofactor.

It is found in the cytoplasm. The catalysed reaction is dTTP + H2O = dTMP + diphosphate + H(+). It carries out the reaction UTP + H2O = UMP + diphosphate + H(+). Its function is as follows. Nucleoside triphosphate pyrophosphatase that hydrolyzes dTTP and UTP. May have a dual role in cell division arrest and in preventing the incorporation of modified nucleotides into cellular nucleic acids. This Lacticaseibacillus casei (strain BL23) (Lactobacillus casei) protein is dTTP/UTP pyrophosphatase.